The chain runs to 557 residues: Potassium-transporting ATPase potassium-binding subunit (557 aa).

12 helical membrane passes run 5–25 (GFLL…PLGS), 63–83 (LSAI…MLLG), 132–152 (GLTV…FALI), 170–190 (LLRI…LFFI), 253–273 (FVQM…FGEV), 283–303 (LLWA…WAEV), 329–349 (VLVS…AVIA), 356–376 (ALGG…FGGV), 379–399 (GLYG…LMIG), 416–436 (LTAL…ALAM), 484–504 (LLAL…MAIA), and 526–546 (LFVG…FIPA).

Belongs to the KdpA family. As to quaternary structure, the system is composed of three essential subunits: KdpA, KdpB and KdpC.

The protein resides in the cell inner membrane. Its function is as follows. Part of the high-affinity ATP-driven potassium transport (or Kdp) system, which catalyzes the hydrolysis of ATP coupled with the electrogenic transport of potassium into the cytoplasm. This subunit binds the periplasmic potassium ions and delivers the ions to the membrane domain of KdpB through an intramembrane tunnel. This Escherichia coli O6:H1 (strain CFT073 / ATCC 700928 / UPEC) protein is Potassium-transporting ATPase potassium-binding subunit.